The following is a 383-amino-acid chain: S-adenosylmethionine synthase (383 aa).

His-15 is a binding site for ATP. Asp-17 contributes to the Mg(2+) binding site. K(+) is bound at residue Glu-43. The L-methionine site is built by Glu-56 and Gln-99. The interval 99 to 109 (QSPDINQGVDR) is flexible loop. ATP is bound by residues 164–166 (DAK), 230–231 (RF), Asp-239, 245–246 (RK), Ala-262, and Lys-266. Residue Asp-239 participates in L-methionine binding. Residue Lys-270 coordinates L-methionine.

Belongs to the AdoMet synthase family. Homotetramer; dimer of dimers. It depends on Mg(2+) as a cofactor. The cofactor is K(+).

It is found in the cytoplasm. The enzyme catalyses L-methionine + ATP + H2O = S-adenosyl-L-methionine + phosphate + diphosphate. The protein operates within amino-acid biosynthesis; S-adenosyl-L-methionine biosynthesis; S-adenosyl-L-methionine from L-methionine: step 1/1. In terms of biological role, catalyzes the formation of S-adenosylmethionine (AdoMet) from methionine and ATP. The overall synthetic reaction is composed of two sequential steps, AdoMet formation and the subsequent tripolyphosphate hydrolysis which occurs prior to release of AdoMet from the enzyme. This Shewanella loihica (strain ATCC BAA-1088 / PV-4) protein is S-adenosylmethionine synthase.